The primary structure comprises 216 residues: Octanoyltransferase (216 aa).

The region spanning 35 to 213 is the BPL/LPL catalytic domain; that stretch reads NSNPDFIWIG…IIQEEFNFDF (179 aa). Substrate contacts are provided by residues 77 to 84, 144 to 146, and 157 to 159; these read RGGEVTCH, SIG, and GFS. Cys-175 serves as the catalytic Acyl-thioester intermediate.

The protein belongs to the LipB family.

It is found in the cytoplasm. It carries out the reaction octanoyl-[ACP] + L-lysyl-[protein] = N(6)-octanoyl-L-lysyl-[protein] + holo-[ACP] + H(+). It participates in protein modification; protein lipoylation via endogenous pathway; protein N(6)-(lipoyl)lysine from octanoyl-[acyl-carrier-protein]: step 1/2. Its function is as follows. Catalyzes the transfer of endogenously produced octanoic acid from octanoyl-acyl-carrier-protein onto the lipoyl domains of lipoate-dependent enzymes. Lipoyl-ACP can also act as a substrate although octanoyl-ACP is likely to be the physiological substrate. In Prochlorococcus marinus (strain MIT 9312), this protein is Octanoyltransferase.